The primary structure comprises 281 residues: Bis(5'-nucleosyl)-tetraphosphatase, symmetrical (281 aa).

It belongs to the Ap4A hydrolase family.

The enzyme catalyses P(1),P(4)-bis(5'-adenosyl) tetraphosphate + H2O = 2 ADP + 2 H(+). In terms of biological role, hydrolyzes diadenosine 5',5'''-P1,P4-tetraphosphate to yield ADP. This chain is Bis(5'-nucleosyl)-tetraphosphatase, symmetrical, found in Delftia acidovorans (strain DSM 14801 / SPH-1).